Consider the following 264-residue polypeptide: S-adenosylmethionine decarboxylase proenzyme (264 aa).

The Schiff-base intermediate with substrate; via pyruvic acid role is filled by S113. Residue S113 is modified to Pyruvic acid (Ser); by autocatalysis. H118 acts as the Proton acceptor; for processing activity in catalysis. Catalysis depends on C141, which acts as the Proton donor; for catalytic activity.

This sequence belongs to the prokaryotic AdoMetDC family. Type 2 subfamily. As to quaternary structure, heterooctamer of four alpha and four beta chains arranged as a tetramer of alpha/beta heterodimers. Pyruvate serves as cofactor. Post-translationally, is synthesized initially as an inactive proenzyme. Formation of the active enzyme involves a self-maturation process in which the active site pyruvoyl group is generated from an internal serine residue via an autocatalytic post-translational modification. Two non-identical subunits are generated from the proenzyme in this reaction, and the pyruvate is formed at the N-terminus of the alpha chain, which is derived from the carboxyl end of the proenzyme. The post-translation cleavage follows an unusual pathway, termed non-hydrolytic serinolysis, in which the side chain hydroxyl group of the serine supplies its oxygen atom to form the C-terminus of the beta chain, while the remainder of the serine residue undergoes an oxidative deamination to produce ammonia and the pyruvoyl group blocking the N-terminus of the alpha chain.

The enzyme catalyses S-adenosyl-L-methionine + H(+) = S-adenosyl 3-(methylsulfanyl)propylamine + CO2. The protein operates within amine and polyamine biosynthesis; S-adenosylmethioninamine biosynthesis; S-adenosylmethioninamine from S-adenosyl-L-methionine: step 1/1. Its function is as follows. Catalyzes the decarboxylation of S-adenosylmethionine to S-adenosylmethioninamine (dcAdoMet), the propylamine donor required for the synthesis of the polyamines spermine and spermidine from the diamine putrescine. The protein is S-adenosylmethionine decarboxylase proenzyme of Xylella fastidiosa (strain Temecula1 / ATCC 700964).